Consider the following 580-residue polypeptide: MAEFLNDQDTRLCDNCKKEIPVFNFTIHEIHCQRNIGVCPVCKEPFPKCDMETHMATEHCQVTCKCNKKLEKRQLKKHEETECPLRLALCQHCDLELSVLKLKDHEDYCGARTELCGTCGRNVLVKDLKTHPEVCGRDVEEKRVEAAMPPNAYDESWGPDRIWIASQLRQIEALDPPMRLPRRPLRAFESDLFQSRTTNQRSMTAQFPIQNNLLEEQERQERNRSRQTPKERGEDSANLDFMLALSLQNEGQAPTLAEQDFWRVIYEADQSREGPSALNDIRGAVDETMLPCEFCEELYPEELLIDHQTSCNPSCALPPLSVGSTSPRGVEDPDAIFQKLMRESAGGQFESLMGFSSSAPVEDSVVIPCEFCGVQLEEEVLFHHQDQCDQRPATANNHVSEGIPSQDLQPRETSPELPKRRVRHQGDLSSGYMNDLKQEMAKGPTYPLPSSRPPNNTTAPPNRLSTSTSGPRPGCQPSPPRALKLNNLDSQGVRGHSRNSHNGALAPGHVPAAYPARSLYPENLVPSFPRGPSGRYGASSRSEGGRNPRVTPTAASYRSRTAKAKTPKQQGAGDAEEEEE.

N-acetylalanine is present on A2. The TRAF-type zinc-finger motif lies at 27–103 (IHEIHCQRNI…DLELSVLKLK (77 aa)). A Phosphoserine modification is found at S190. Residues 197–209 (TTNQRSMTAQFPI) are compositionally biased toward polar residues. Residues 197–236 (TTNQRSMTAQFPIQNNLLEEQERQERNRSRQTPKERGEDS) form a disordered region. Residues 216–235 (EQERQERNRSRQTPKERGED) are compositionally biased toward basic and acidic residues. Phosphoserine occurs at positions 326, 414, and 429. The interval 392-580 (PATANNHVSE…GAGDAEEEEE (189 aa)) is disordered. Residues 409 to 419 (QPRETSPELPK) are compositionally biased toward basic and acidic residues. The segment covering 453 to 463 (PPNNTTAPPNR) has biased composition (low complexity). S469 is subject to Phosphoserine.

Interacts with MAVS, TICAM1, TRAF1, TRAF2, TRAF3 and TRAF6.

In terms of biological role, negative feedback regulator that controls excessive innate immune responses. Regulates both Toll-like receptor 4 (TLR4) and DDX58/RIG1-like helicases (RLH) pathways. May inhibit the LTR pathway by direct interaction with TRAF6 and attenuation of NF-kappa-B activation. May negatively regulate the RLH pathway downstream from MAVS and upstream of NF-kappa-B and IRF3. The sequence is that of TRAF-type zinc finger domain-containing protein 1 (TRAFD1) from Bos taurus (Bovine).